The chain runs to 509 residues: GMP synthase [glutamine-hydrolyzing] (509 aa).

A Glutamine amidotransferase type-1 domain is found at 4–193 (KILILDFGSQ…VVHICGCSQD (190 aa)). Residue cysteine 79 is the Nucleophile of the active site. Catalysis depends on residues histidine 167 and glutamate 169. The GMPS ATP-PPase domain occupies 194–384 (WTPDAFVETT…LGIDDIILKR (191 aa)). 221–227 (SGGVDSS) is a binding site for ATP.

Homodimer.

It carries out the reaction XMP + L-glutamine + ATP + H2O = GMP + L-glutamate + AMP + diphosphate + 2 H(+). It functions in the pathway purine metabolism; GMP biosynthesis; GMP from XMP (L-Gln route): step 1/1. Functionally, catalyzes the synthesis of GMP from XMP. This Cytophaga hutchinsonii (strain ATCC 33406 / DSM 1761 / CIP 103989 / NBRC 15051 / NCIMB 9469 / D465) protein is GMP synthase [glutamine-hydrolyzing].